The following is a 384-amino-acid chain: 1-deoxy-D-xylulose 5-phosphate reductoisomerase (384 aa).

Threonine 11, glycine 12, serine 13, isoleucine 14, lysine 38, and asparagine 123 together coordinate NADPH. Lysine 124 contacts 1-deoxy-D-xylulose 5-phosphate. Position 125 (glutamate 125) interacts with NADPH. A Mn(2+)-binding site is contributed by aspartate 148. The 1-deoxy-D-xylulose 5-phosphate site is built by serine 149, glutamate 150, serine 174, and histidine 197. Glutamate 150 is a Mn(2+) binding site. Residue glycine 203 participates in NADPH binding. Serine 210, asparagine 215, lysine 216, and glutamate 219 together coordinate 1-deoxy-D-xylulose 5-phosphate. Mn(2+) is bound at residue glutamate 219.

It belongs to the DXR family. The cofactor is Mg(2+). Mn(2+) serves as cofactor.

The enzyme catalyses 2-C-methyl-D-erythritol 4-phosphate + NADP(+) = 1-deoxy-D-xylulose 5-phosphate + NADPH + H(+). It participates in isoprenoid biosynthesis; isopentenyl diphosphate biosynthesis via DXP pathway; isopentenyl diphosphate from 1-deoxy-D-xylulose 5-phosphate: step 1/6. Catalyzes the NADPH-dependent rearrangement and reduction of 1-deoxy-D-xylulose-5-phosphate (DXP) to 2-C-methyl-D-erythritol 4-phosphate (MEP). This is 1-deoxy-D-xylulose 5-phosphate reductoisomerase from Halothermothrix orenii (strain H 168 / OCM 544 / DSM 9562).